The following is a 579-amino-acid chain: Kelch repeat and BTB domain-containing protein F47D12.7 (579 aa).

One can recognise a BTB domain in the interval 51–119 (PTVTLVLRNN…PKAFEQGIKP (69 aa)). Kelch repeat units follow at residues 266–316 (AIVC…VVED), 317–363 (KLIV…RVND), 369–415 (LVFA…TIDN), 417–463 (IVAI…SIMN), 465–511 (VCMI…QMDT), and 513–559 (YVYV…TLSD).

The polypeptide is Kelch repeat and BTB domain-containing protein F47D12.7 (Caenorhabditis elegans).